The sequence spans 345 residues: Dihydroorotase (345 aa).

Residues histidine 14 and histidine 16 each coordinate Zn(2+). Substrate contacts are provided by residues 16-18 (HLR) and asparagine 42. Zn(2+) is bound by residues lysine 102, histidine 139, and histidine 177. Residue lysine 102 is modified to N6-carboxylysine. Histidine 139 is a substrate binding site. Leucine 222 is a binding site for substrate. Position 250 (aspartate 250) interacts with Zn(2+). The active site involves aspartate 250. The substrate site is built by histidine 254 and alanine 266.

This sequence belongs to the metallo-dependent hydrolases superfamily. DHOase family. Class II DHOase subfamily. As to quaternary structure, homodimer. It depends on Zn(2+) as a cofactor.

It carries out the reaction (S)-dihydroorotate + H2O = N-carbamoyl-L-aspartate + H(+). Its pathway is pyrimidine metabolism; UMP biosynthesis via de novo pathway; (S)-dihydroorotate from bicarbonate: step 3/3. In terms of biological role, catalyzes the reversible cyclization of carbamoyl aspartate to dihydroorotate. This Nitrosomonas eutropha (strain DSM 101675 / C91 / Nm57) protein is Dihydroorotase.